The sequence spans 103 residues: UPF0473 protein LVIS_1220 (103 aa).

Belongs to the UPF0473 family.

This is UPF0473 protein LVIS_1220 from Levilactobacillus brevis (strain ATCC 367 / BCRC 12310 / CIP 105137 / JCM 1170 / LMG 11437 / NCIMB 947 / NCTC 947) (Lactobacillus brevis).